The primary structure comprises 366 residues: Cobalt-precorrin-5B C(1)-methyltransferase (366 aa).

It belongs to the CbiD family.

It catalyses the reaction Co-precorrin-5B + S-adenosyl-L-methionine = Co-precorrin-6A + S-adenosyl-L-homocysteine. It participates in cofactor biosynthesis; adenosylcobalamin biosynthesis; cob(II)yrinate a,c-diamide from sirohydrochlorin (anaerobic route): step 6/10. Its function is as follows. Catalyzes the methylation of C-1 in cobalt-precorrin-5B to form cobalt-precorrin-6A. In Thermus thermophilus (strain ATCC BAA-163 / DSM 7039 / HB27), this protein is Cobalt-precorrin-5B C(1)-methyltransferase.